The sequence spans 178 residues: Interleukin-10 (178 aa).

A signal peptide spans 1–18 (MHSSALLCCLVVLTGVRA). Disulfide bonds link cysteine 30–cysteine 126 and cysteine 80–cysteine 132. A glycan (N-linked (GlcNAc...) asparagine) is linked at asparagine 134.

This sequence belongs to the IL-10 family. In terms of assembly, homodimer. Interacts with IL10RA and IL10RB.

It localises to the secreted. Functionally, major immune regulatory cytokine that acts on many cells of the immune system where it has profound anti-inflammatory functions, limiting excessive tissue disruption caused by inflammation. Mechanistically, IL10 binds to its heterotetrameric receptor comprising IL10RA and IL10RB leading to JAK1 and STAT2-mediated phosphorylation of STAT3. In turn, STAT3 translocates to the nucleus where it drives expression of anti-inflammatory mediators. Targets antigen-presenting cells (APCs) such as macrophages and monocytes and inhibits their release of pro-inflammatory cytokines including granulocyte-macrophage colony-stimulating factor /GM-CSF, granulocyte colony-stimulating factor/G-CSF, IL-1 alpha, IL-1 beta, IL-6, IL-8 and TNF-alpha. Also interferes with antigen presentation by reducing the expression of MHC-class II and co-stimulatory molecules, thereby inhibiting their ability to induce T cell activation. In addition, controls the inflammatory response of macrophages by reprogramming essential metabolic pathways including mTOR signaling. This Papio hamadryas (Hamadryas baboon) protein is Interleukin-10 (IL10).